The sequence spans 86 residues: UPF0180 protein CA_C1486 (86 aa).

The protein belongs to the UPF0180 family.

This chain is UPF0180 protein CA_C1486, found in Clostridium acetobutylicum (strain ATCC 824 / DSM 792 / JCM 1419 / IAM 19013 / LMG 5710 / NBRC 13948 / NRRL B-527 / VKM B-1787 / 2291 / W).